Here is a 515-residue protein sequence, read N- to C-terminus: Fibril protein (515 aa).

Position 1 is a blocked amino end (Met) (methionine 1). Helical stretches follow at residues 21–34, 206–228, 357–376, and 426–440; these read VKKY…IQHV, HKFK…FNLL, KIET…AEKC, and SNEF…LKDV.

The protein localises to the cytoplasm. It localises to the cytoskeleton. Its function is as follows. Acts as a cytoskeletal structure involved in the shape and motility of spiroplasmas. The sequence is that of Fibril protein from Spiroplasma citri.